Reading from the N-terminus, the 330-residue chain is Protein rlx (330 aa).

The segment at 220 to 330 is disordered; sequence LGEDYDKGGL…EKTRGFDLEL (111 aa). 2 stretches are compositionally biased toward basic and acidic residues: residues 237 to 269 and 279 to 330; these read NEQREEQARQRELEQARREKIKRDKEREKEWAR and QNRE…DLEL.

Its function is as follows. This protein is probably required for relaxation complex formation and plasmid mobilization by conjugative plasmids. This is Protein rlx (rlx) from Staphylococcus aureus.